The chain runs to 176 residues: Isopentenyl-diphosphate Delta-isomerase (176 aa).

The Mn(2+) site is built by His22 and His28. Residues 26 to 160 (LRHKAVSVFV…PDRYTPWLRI (135 aa)) form the Nudix hydrolase domain. Cys62 is an active-site residue. His64 is a Mn(2+) binding site. Residue Glu82 coordinates Mg(2+). Glu108 and Glu110 together coordinate Mn(2+). Residue Glu110 is part of the active site.

The protein belongs to the IPP isomerase type 1 family. Mg(2+) is required as a cofactor. It depends on Mn(2+) as a cofactor.

It localises to the cytoplasm. The enzyme catalyses isopentenyl diphosphate = dimethylallyl diphosphate. Its pathway is isoprenoid biosynthesis; dimethylallyl diphosphate biosynthesis; dimethylallyl diphosphate from isopentenyl diphosphate: step 1/1. It participates in porphyrin-containing compound metabolism; chlorophyll biosynthesis. Catalyzes the 1,3-allylic rearrangement of the homoallylic substrate isopentenyl (IPP) to its highly electrophilic allylic isomer, dimethylallyl diphosphate (DMAPP). In Roseobacter denitrificans (strain ATCC 33942 / OCh 114) (Erythrobacter sp. (strain OCh 114)), this protein is Isopentenyl-diphosphate Delta-isomerase.